Reading from the N-terminus, the 507-residue chain is Extracellular elastase (507 aa).

The signal sequence occupies residues Met1–Ala28. Residues Lys29–Glu207 constitute a propeptide that is removed on maturation. Asp347 serves as a coordination point for Ca(2+). His351 provides a ligand contact to Zn(2+). Glu352 is an active-site residue. Zn(2+) contacts are provided by His355 and Glu375. Residues Asp386, Glu388, Asp389, Leu391, Glu394, Tyr397, Thr398, Val401, and Asp404 each contribute to the Ca(2+) site. His435 (proton donor) is an active-site residue.

It belongs to the peptidase M4 family. Requires Ca(2+) as cofactor. It depends on Zn(2+) as a cofactor.

It localises to the secreted. Functionally, protease that has a low substrate specificity. Glucagon is preferentially cleaved between aromatic (Phe) and hydrophobic (Val) amino acids. Hydrolyzes casein and elastin. In Staphylococcus epidermidis (strain ATCC 12228 / FDA PCI 1200), this protein is Extracellular elastase (sepA).